The primary structure comprises 246 residues: Uridylate kinase (246 aa).

18 to 21 (KVSG) provides a ligand contact to ATP. G60 provides a ligand contact to UMP. G61 and R65 together coordinate ATP. UMP is bound by residues D80 and 141–148 (TGNPFFTT). Residues T168, Q169, Y174, and D177 each coordinate ATP.

Belongs to the UMP kinase family. Homohexamer.

Its subcellular location is the cytoplasm. It catalyses the reaction UMP + ATP = UDP + ADP. It functions in the pathway pyrimidine metabolism; CTP biosynthesis via de novo pathway; UDP from UMP (UMPK route): step 1/1. Inhibited by UTP. Catalyzes the reversible phosphorylation of UMP to UDP. In Granulibacter bethesdensis (strain ATCC BAA-1260 / CGDNIH1), this protein is Uridylate kinase.